The sequence spans 203 residues: Small ribosomal subunit protein uS4 (203 aa).

Positions 93-156 (RRLDNVVYRL…LKVPAILEAV (64 aa)) constitute an S4 RNA-binding domain.

Belongs to the universal ribosomal protein uS4 family. As to quaternary structure, part of the 30S ribosomal subunit. Contacts protein S5. The interaction surface between S4 and S5 is involved in control of translational fidelity.

In terms of biological role, one of the primary rRNA binding proteins, it binds directly to 16S rRNA where it nucleates assembly of the body of the 30S subunit. Its function is as follows. With S5 and S12 plays an important role in translational accuracy. This Streptococcus pneumoniae serotype 2 (strain D39 / NCTC 7466) protein is Small ribosomal subunit protein uS4.